A 310-amino-acid polypeptide reads, in one-letter code: Transcription factor UNE12 (310 aa).

Disordered stretches follow at residues 124 to 156 and 229 to 253; these read HGQP…ATDP and SSSV…WSND. The region spanning 152-201 is the bHLH domain; sequence QATDPHSIAERLRRERIAERIRALQELVPTVNKTDRAAMIDEIVDYVKFL.

Homodimer. As to expression, expressed constitutively in roots, leaves, stems, and flowers.

It is found in the nucleus. Functionally, required for ovule fertilization. The polypeptide is Transcription factor UNE12 (UNE12) (Arabidopsis thaliana (Mouse-ear cress)).